The following is a 168-amino-acid chain: ATP synthase subunit b, chloroplastic (168 aa).

The helical transmembrane segment at 20 to 37 threads the bilayer; sequence LNLAVVLPIVFTLGRDTL.

Belongs to the ATPase B chain family. As to quaternary structure, F-type ATPases have 2 components, F(1) - the catalytic core - and F(0) - the membrane proton channel. F(1) has five subunits: alpha(3), beta(3), gamma(1), delta(1), epsilon(1). F(0) has four main subunits: a(1), b(1), b'(1) and c(10-14). The alpha and beta chains form an alternating ring which encloses part of the gamma chain. F(1) is attached to F(0) by a central stalk formed by the gamma and epsilon chains, while a peripheral stalk is formed by the delta, b and b' chains.

It is found in the plastid. Its subcellular location is the chloroplast thylakoid membrane. Functionally, f(1)F(0) ATP synthase produces ATP from ADP in the presence of a proton or sodium gradient. F-type ATPases consist of two structural domains, F(1) containing the extramembraneous catalytic core and F(0) containing the membrane proton channel, linked together by a central stalk and a peripheral stalk. During catalysis, ATP synthesis in the catalytic domain of F(1) is coupled via a rotary mechanism of the central stalk subunits to proton translocation. Its function is as follows. Component of the F(0) channel, it forms part of the peripheral stalk, linking F(1) to F(0). This chain is ATP synthase subunit b, chloroplastic, found in Ostreococcus tauri.